The following is a 564-amino-acid chain: Type 2 DNA topoisomerase 6 subunit B (564 aa).

ATP-binding positions include asparagine 46, aspartate 78, threonine 99–lysine 100, glycine 109–serine 116, and lysine 471.

The protein belongs to the TOP6B family. As to quaternary structure, homodimer. Heterotetramer of two Top6A and two Top6B chains.

It catalyses the reaction ATP-dependent breakage, passage and rejoining of double-stranded DNA.. Relaxes both positive and negative superturns and exhibits a strong decatenase activity. The sequence is that of Type 2 DNA topoisomerase 6 subunit B from Pyrococcus horikoshii (strain ATCC 700860 / DSM 12428 / JCM 9974 / NBRC 100139 / OT-3).